The primary structure comprises 162 residues: Phosphopantetheine adenylyltransferase (162 aa).

Serine 9 provides a ligand contact to substrate. ATP is bound by residues 9–10 and histidine 17; that span reads SF. Substrate-binding residues include lysine 41, leucine 73, and lysine 87. ATP is bound by residues 88 to 90, glutamate 98, and 122 to 128; these read GLR and YSFLSSS.

The protein belongs to the bacterial CoaD family. In terms of assembly, homohexamer. It depends on Mg(2+) as a cofactor.

The protein resides in the cytoplasm. It carries out the reaction (R)-4'-phosphopantetheine + ATP + H(+) = 3'-dephospho-CoA + diphosphate. The protein operates within cofactor biosynthesis; coenzyme A biosynthesis; CoA from (R)-pantothenate: step 4/5. Functionally, reversibly transfers an adenylyl group from ATP to 4'-phosphopantetheine, yielding dephospho-CoA (dPCoA) and pyrophosphate. The sequence is that of Phosphopantetheine adenylyltransferase from Salinispora tropica (strain ATCC BAA-916 / DSM 44818 / JCM 13857 / NBRC 105044 / CNB-440).